Reading from the N-terminus, the 312-residue chain is Deoxycytidylate deaminase (312 aa).

The 130-residue stretch at 162–291 folds into the CMP/dCMP-type deaminase domain; the sequence is SWDSYFMKLA…RMDEESFKVL (130 aa). Position 233 (His-233) interacts with Zn(2+). The active-site Proton donor is the Glu-235. 2 residues coordinate Zn(2+): Cys-260 and Cys-263.

This sequence belongs to the cytidine and deoxycytidylate deaminase family. Zn(2+) serves as cofactor.

It catalyses the reaction dCMP + H2O + H(+) = dUMP + NH4(+). Allosteric enzyme whose activity is greatly influenced by the end products of its metabolic pathway, dCTP and dTTP. Functionally, catalyzes the hydrolytic deamination of dCMP to yield dUMP, the nucleotide substrate for thymidylate synthetase. This Saccharomyces cerevisiae (strain ATCC 204508 / S288c) (Baker's yeast) protein is Deoxycytidylate deaminase.